Reading from the N-terminus, the 338-residue chain is Protein FosB (338 aa).

Disordered stretches follow at residues 1-54, 79-191, 222-276, and 316-338; these read MFQA…PGSF, MAQS…DQLE, CKIP…PPNL, and GAQR…LLAL. Composition is skewed to polar residues over residues 13-31 and 79-88; these read SRCS…SVDS and MAQSQGQPLA. Position 27 is a phosphoserine (serine 27). Over residues 113–124 the composition is skewed to gly residues; it reads SSGGASGSGGPS. Low complexity predominate over residues 125–137; the sequence is TSGTTSGPGPARP. The region spanning 155–218 is the bZIP domain; sequence EEKRRVRRER…ERLEFVLVAH (64 aa). The basic motif stretch occupies residues 157–182; sequence KRRVRRERNKLAAAKCRNRRRELTDR. The leucine-zipper stretch occupies residues 183 to 211; it reads LQAETDQLEEEKAELESEIAELQKEKERL. Pro residues predominate over residues 256–265; it reads LPPPPPPPLP. Composition is skewed to polar residues over residues 266 to 276 and 318 to 338; these read FQTSQDAPPNL and QRTS…LLAL.

This sequence belongs to the bZIP family. Fos subfamily. In terms of assembly, heterodimer; binds to DNA as heterodimer. Component of an AP-1 transcription factor complex; composed of FOS-JUN heterodimers. As part of the AP-1 transcription factor complex, forms heterodimers with JUN, JUNB or JUND, thereby binding to the AP-1 consensus sequence and stimulating transcription. Interacts with the BAF multiprotein chromatin-remodeling complex subunits SMARCB1 and SMARCD1. Interacts with ARID1A and JUN. Homodimer under oxidizing conditions and monomer under reducing conditions (in vitro). Heterodimer; binds to DNA as heterodimer. Forms heterodimers with JUNB, JUN or JUND; thereby binding to the AP-1 consensus sequence but does not stimulate transcription. Forms heterodimers with JUND under oxidizing conditions. In terms of processing, phosphorylated. Post-translationally, phosphorylated at Ser-27 by CSNK2A1; phosphorylation increases protein stability and transactivation potential. Expressed in the nucleus accumbens of the striatum (at protein level).

It localises to the nucleus. In terms of biological role, heterodimerizes with proteins of the JUN family to form an AP-1 transcription factor complex, thereby enhancing their DNA binding activity to gene promoters containing an AP-1 consensus sequence 5'-TGA[GC]TCA-3' and enhancing their transcriptional activity. As part of the AP-1 complex, facilitates enhancer selection together with cell-type-specific transcription factors by collaboratively binding to nucleosomal enhancers and recruiting the SWI/SNF (BAF) chromatin remodeling complex to establish accessible chromatin. Together with JUN, plays a role in activation-induced cell death of T cells by binding to the AP-1 promoter site of FASLG/CD95L, and inducing its transcription in response to activation of the TCR/CD3 signaling pathway. Exhibits transactivation activity in vitro. Involved in the display of nurturing behavior towards newborns. May play a role in neurogenesis in the hippocampus and in learning and memory-related tasks by regulating the expression of various genes involved in neurogenesis, depression and epilepsy. Implicated in behavioral responses related to morphine reward and spatial memory. Exhibits lower transactivation activity than isoform 1 in vitro. The heterodimer with JUN does not display any transcriptional activity, and may thereby act as an transcriptional inhibitor. May be involved in the regulation of neurogenesis in the hippocampus. May play a role in synaptic modifications in nucleus accumbens medium spiny neurons and thereby play a role in adaptive and pathological reward-dependent learning, including maladaptive responses involved in drug addiction. Seems to be more stably expressed with a half-life of ~9.5 hours in cell culture as compared to 1.5 hours half-life of isoform 1. This chain is Protein FosB (FOSB), found in Homo sapiens (Human).